A 271-amino-acid polypeptide reads, in one-letter code: Formamidopyrimidine-DNA glycosylase (271 aa).

Pro-2 acts as the Schiff-base intermediate with DNA in catalysis. The active-site Proton donor is the Glu-3. The Proton donor; for beta-elimination activity role is filled by Lys-58. Residues His-91, Arg-110, and Arg-152 each contribute to the DNA site. Residues 237-271 form an FPG-type zinc finger; sequence SIYGKKGRPCPKCGSAIRMMRLGGRSTFFCPLCQK. The active-site Proton donor; for delta-elimination activity is Arg-261.

The protein belongs to the FPG family. Monomer. Requires Zn(2+) as cofactor.

The catalysed reaction is Hydrolysis of DNA containing ring-opened 7-methylguanine residues, releasing 2,6-diamino-4-hydroxy-5-(N-methyl)formamidopyrimidine.. It carries out the reaction 2'-deoxyribonucleotide-(2'-deoxyribose 5'-phosphate)-2'-deoxyribonucleotide-DNA = a 3'-end 2'-deoxyribonucleotide-(2,3-dehydro-2,3-deoxyribose 5'-phosphate)-DNA + a 5'-end 5'-phospho-2'-deoxyribonucleoside-DNA + H(+). In terms of biological role, involved in base excision repair of DNA damaged by oxidation or by mutagenic agents. Acts as a DNA glycosylase that recognizes and removes damaged bases. Has a preference for oxidized purines, such as 7,8-dihydro-8-oxoguanine (8-oxoG). Has AP (apurinic/apyrimidinic) lyase activity and introduces nicks in the DNA strand. Cleaves the DNA backbone by beta-delta elimination to generate a single-strand break at the site of the removed base with both 3'- and 5'-phosphates. The polypeptide is Formamidopyrimidine-DNA glycosylase (Geotalea daltonii (strain DSM 22248 / JCM 15807 / FRC-32) (Geobacter daltonii)).